The chain runs to 321 residues: Probable endolytic peptidoglycan transglycosylase RlpA (321 aa).

This sequence belongs to the RlpA family.

Lytic transglycosylase with a strong preference for naked glycan strands that lack stem peptides. The chain is Probable endolytic peptidoglycan transglycosylase RlpA from Synechocystis sp. (strain ATCC 27184 / PCC 6803 / Kazusa).